Consider the following 85-residue polypeptide: Major outer membrane protein 1 (85 aa).

Positions Met1 to Gly18 are cleaved as a signal peptide. The chain crosses the membrane as a helical span at residues Tyr22–Leu42.

In terms of assembly, forms extremely stable complexes with apparent masses of 150, 50, 45 and 38 kDa. Found in a ring-shaped complex of 7 nm diameter with a 2 nm channel through the middle. Complete denaturation requires temperatures over 110 degrees Celsius.

The protein resides in the cell outer membrane. The most abundant protein of the outer membrane, it forms a pore through it. This is Major outer membrane protein 1 (ihomp1) from Ignicoccus hospitalis (strain KIN4/I / DSM 18386 / JCM 14125).